A 295-amino-acid polypeptide reads, in one-letter code: Ribosomal RNA small subunit methyltransferase A (295 aa).

Asn-33, Val-35, Gly-60, Glu-81, Asp-111, and Asn-129 together coordinate S-adenosyl-L-methionine.

It belongs to the class I-like SAM-binding methyltransferase superfamily. rRNA adenine N(6)-methyltransferase family. RsmA subfamily.

It is found in the cytoplasm. It carries out the reaction adenosine(1518)/adenosine(1519) in 16S rRNA + 4 S-adenosyl-L-methionine = N(6)-dimethyladenosine(1518)/N(6)-dimethyladenosine(1519) in 16S rRNA + 4 S-adenosyl-L-homocysteine + 4 H(+). Functionally, specifically dimethylates two adjacent adenosines (A1518 and A1519) in the loop of a conserved hairpin near the 3'-end of 16S rRNA in the 30S particle. May play a critical role in biogenesis of 30S subunits. In Streptomyces avermitilis (strain ATCC 31267 / DSM 46492 / JCM 5070 / NBRC 14893 / NCIMB 12804 / NRRL 8165 / MA-4680), this protein is Ribosomal RNA small subunit methyltransferase A.